Here is a 427-residue protein sequence, read N- to C-terminus: Peptidase B (427 aa).

Residues K195 and D200 each coordinate Mn(2+). Residue K207 is part of the active site. D218, D277, and E279 together coordinate Mn(2+). R281 is a catalytic residue.

Belongs to the peptidase M17 family. As to quaternary structure, homohexamer. The cofactor is Mn(2+).

The protein resides in the cytoplasm. It carries out the reaction Release of an N-terminal amino acid, Xaa, from a peptide or arylamide. Xaa is preferably Glu or Asp but may be other amino acids, including Leu, Met, His, Cys and Gln.. Probably plays an important role in intracellular peptide degradation. In Salmonella arizonae (strain ATCC BAA-731 / CDC346-86 / RSK2980), this protein is Peptidase B.